Consider the following 272-residue polypeptide: 3-methyl-2-oxobutanoate hydroxymethyltransferase (272 aa).

The Mg(2+) site is built by Asp43 and Asp82. Residues 43–44 (DS), Asp82, and Lys112 contribute to the 3-methyl-2-oxobutanoate site. Glu114 is a binding site for Mg(2+). Glu179 (proton acceptor) is an active-site residue.

Belongs to the PanB family. Homodecamer; pentamer of dimers. Mg(2+) serves as cofactor.

The protein resides in the cytoplasm. The enzyme catalyses 3-methyl-2-oxobutanoate + (6R)-5,10-methylene-5,6,7,8-tetrahydrofolate + H2O = 2-dehydropantoate + (6S)-5,6,7,8-tetrahydrofolate. The protein operates within cofactor biosynthesis; (R)-pantothenate biosynthesis; (R)-pantoate from 3-methyl-2-oxobutanoate: step 1/2. Its function is as follows. Catalyzes the reversible reaction in which hydroxymethyl group from 5,10-methylenetetrahydrofolate is transferred onto alpha-ketoisovalerate to form ketopantoate. This chain is 3-methyl-2-oxobutanoate hydroxymethyltransferase, found in Staphylococcus aureus (strain COL).